The sequence spans 434 residues: MALVSETGVDVSTDGITVVLGSQWGDEGKGKLVDILCDNVDICARCAGGNNAGHTIVANGQTYDFHILPSGLVNPKSVNLIGSGVVVYLPAFFHELENLVKKGLDCTNRIFISDRAQLVFDYHQRADALNEAELGGKSIGTTGKGIGPAYSTKATRSGIRVHHLYNWPEFESRYRKNVRDLQKRYGAFEYDVEGELVRYKELAAKLQPYVVDSIAFIHTGLKEKKRILVEGANALMLDLDFGTYPYVTSSNTTIGGVCTGLGVPPRAIANVIGVVKAYTTRVGAGPFPTEQLNEIGDHLQKVGREFGVTTGRKRRCGWLDLVVLKYSTLINGYDSLNLTKLDILDDFKEIKVAVAYIVDGKRIETFPADLDSLESAEIIYETFPGWQTKTTGITRWEDMPENAKKYIEFIEKFLGVPIKYIGVGPGRDEVLVKH.

GTP-binding positions include 25–31 (GDEGKGK) and 53–55 (GHT). Aspartate 26 serves as the catalytic Proton acceptor. Residues aspartate 26 and glycine 53 each contribute to the Mg(2+) site. IMP-binding positions include 26 to 29 (DEGK), 51 to 54 (NAGH), threonine 142, arginine 156, asparagine 233, threonine 248, and arginine 312. The active-site Proton donor is the histidine 54. Position 308–314 (308–314 (VTTGRKR)) interacts with substrate. GTP-binding positions include arginine 314, 340 to 342 (KLD), and 422 to 424 (GVG).

It belongs to the adenylosuccinate synthetase family. Homodimer. The cofactor is Mg(2+).

It localises to the cytoplasm. The enzyme catalyses IMP + L-aspartate + GTP = N(6)-(1,2-dicarboxyethyl)-AMP + GDP + phosphate + 2 H(+). The protein operates within purine metabolism; AMP biosynthesis via de novo pathway; AMP from IMP: step 1/2. In terms of biological role, plays an important role in the de novo pathway and in the salvage pathway of purine nucleotide biosynthesis. Catalyzes the first committed step in the biosynthesis of AMP from IMP. The polypeptide is Adenylosuccinate synthetase (Schizosaccharomyces japonicus (strain yFS275 / FY16936) (Fission yeast)).